A 144-amino-acid chain; its full sequence is Deoxyuridine 5'-triphosphate nucleotidohydrolase (144 aa).

Residues 63-65 (RSG), asparagine 76, and 80-82 (TID) each bind substrate.

The protein belongs to the dUTPase family. Mg(2+) serves as cofactor.

It catalyses the reaction dUTP + H2O = dUMP + diphosphate + H(+). It functions in the pathway pyrimidine metabolism; dUMP biosynthesis; dUMP from dCTP (dUTP route): step 2/2. In terms of biological role, this enzyme is involved in nucleotide metabolism: it produces dUMP, the immediate precursor of thymidine nucleotides and it decreases the intracellular concentration of dUTP so that uracil cannot be incorporated into DNA. The protein is Deoxyuridine 5'-triphosphate nucleotidohydrolase of Bacteroides thetaiotaomicron (strain ATCC 29148 / DSM 2079 / JCM 5827 / CCUG 10774 / NCTC 10582 / VPI-5482 / E50).